Consider the following 227-residue polypeptide: MSKAVVVFSGGQDSTTCLIQALQHFDEVHGITFDYGQRHREEIEIAKTLASKLKLASHKVMDVTLLNELAISALTRDSIPVSNDLMDNGLPNTFVPGRNILFLTLAGIYAYQLGADVVITGVCETDFSGYPDCRNDFVKAMQAALEQGMDKKLTIQTPLMWLDKAETWALADKYQSLDLIRDETLTCYNGIKGDGCGTCPACLLRKRGLEEYLADKEAIQARLTAKC.

Position 8 to 18 (8 to 18) interacts with ATP; it reads FSGGQDSTTCL. Zn(2+) is bound by residues C187, C196, C199, and C202.

This sequence belongs to the QueC family. Zn(2+) serves as cofactor.

The catalysed reaction is 7-carboxy-7-deazaguanine + NH4(+) + ATP = 7-cyano-7-deazaguanine + ADP + phosphate + H2O + H(+). It functions in the pathway purine metabolism; 7-cyano-7-deazaguanine biosynthesis. In terms of biological role, catalyzes the ATP-dependent conversion of 7-carboxy-7-deazaguanine (CDG) to 7-cyano-7-deazaguanine (preQ(0)). This Shewanella pealeana (strain ATCC 700345 / ANG-SQ1) protein is 7-cyano-7-deazaguanine synthase.